Here is a 233-residue protein sequence, read N- to C-terminus: Lipoprotein-releasing system ATP-binding protein LolD (233 aa).

Positions 6–233 constitute an ABC transporter domain; it reads LQCDNLCKRY…TAELSLMGAE (228 aa). 42–49 is an ATP binding site; that stretch reads GSSGSGKS.

This sequence belongs to the ABC transporter superfamily. Lipoprotein translocase (TC 3.A.1.125) family. In terms of assembly, the complex is composed of two ATP-binding proteins (LolD) and two transmembrane proteins (LolC and LolE).

The protein localises to the cell inner membrane. Its function is as follows. Part of the ABC transporter complex LolCDE involved in the translocation of mature outer membrane-directed lipoproteins, from the inner membrane to the periplasmic chaperone, LolA. Responsible for the formation of the LolA-lipoprotein complex in an ATP-dependent manner. Such a release is dependent of the sorting-signal (absence of an Asp at position 2 of the mature lipoprotein) and of LolA. The polypeptide is Lipoprotein-releasing system ATP-binding protein LolD (Escherichia coli (strain K12)).